The chain runs to 346 residues: Phenylalanine--tRNA ligase alpha subunit (346 aa).

Position 262 (glutamate 262) interacts with Mg(2+).

The protein belongs to the class-II aminoacyl-tRNA synthetase family. Phe-tRNA synthetase alpha subunit type 1 subfamily. In terms of assembly, tetramer of two alpha and two beta subunits. The cofactor is Mg(2+).

The protein resides in the cytoplasm. The catalysed reaction is tRNA(Phe) + L-phenylalanine + ATP = L-phenylalanyl-tRNA(Phe) + AMP + diphosphate + H(+). The chain is Phenylalanine--tRNA ligase alpha subunit from Ehrlichia chaffeensis (strain ATCC CRL-10679 / Arkansas).